A 330-amino-acid chain; its full sequence is Inositol 2-dehydrogenase (330 aa).

The protein belongs to the Gfo/Idh/MocA family.

It carries out the reaction myo-inositol + NAD(+) = scyllo-inosose + NADH + H(+). It functions in the pathway polyol metabolism; myo-inositol degradation into acetyl-CoA; acetyl-CoA from myo-inositol: step 1/7. Its function is as follows. Involved in the oxidation of myo-inositol (MI) to 2-keto-myo-inositol (2KMI or 2-inosose). This chain is Inositol 2-dehydrogenase (idhA), found in Rhizobium meliloti (strain 1021) (Ensifer meliloti).